The following is a 362-amino-acid chain: Ribosome-binding ATPase YchF (362 aa).

The 253-residue stretch at Phe3–Met255 folds into the OBG-type G domain. ATP is bound at residue Asn12 to Thr17. Residues Ser16 and Thr36 each coordinate Mg(2+). One can recognise a TGS domain in the interval Asn277–Phe360.

Belongs to the TRAFAC class OBG-HflX-like GTPase superfamily. OBG GTPase family. YchF/OLA1 subfamily. It depends on Mg(2+) as a cofactor.

Its function is as follows. ATPase that binds to both the 70S ribosome and the 50S ribosomal subunit in a nucleotide-independent manner. The chain is Ribosome-binding ATPase YchF from Buchnera aphidicola subsp. Schizaphis graminum (strain Sg).